Here is a 245-residue protein sequence, read N- to C-terminus: 1-(5-phosphoribosyl)-5-[(5-phosphoribosylamino)methylideneamino] imidazole-4-carboxamide isomerase (245 aa).

Catalysis depends on Asp-7, which acts as the Proton acceptor. Asp-129 (proton donor) is an active-site residue.

Belongs to the HisA/HisF family.

Its subcellular location is the cytoplasm. It catalyses the reaction 1-(5-phospho-beta-D-ribosyl)-5-[(5-phospho-beta-D-ribosylamino)methylideneamino]imidazole-4-carboxamide = 5-[(5-phospho-1-deoxy-D-ribulos-1-ylimino)methylamino]-1-(5-phospho-beta-D-ribosyl)imidazole-4-carboxamide. The protein operates within amino-acid biosynthesis; L-histidine biosynthesis; L-histidine from 5-phospho-alpha-D-ribose 1-diphosphate: step 4/9. In Escherichia coli O17:K52:H18 (strain UMN026 / ExPEC), this protein is 1-(5-phosphoribosyl)-5-[(5-phosphoribosylamino)methylideneamino] imidazole-4-carboxamide isomerase.